Reading from the N-terminus, the 483-residue chain is MARAIMFQGTGSDVGKSVLVAGLCRVARNRGLNVRPFKPQNMSNNAAVSDDGGEIGRAQWLQALACGVPSSVHMNPVLLKPQTDMGSQVIVQGQVRGEARGRYYQELKPQLMAAVMESFARVSEGADLVLVEGAGSPAEINLRAGDIANMGFATQADVPVVLVGDIDRGGVIASLVGTHTILSEQDRAMVRGFLINKFRGDISLFDDGLAAITRFTGWRSFGVVPWLKAVSRLPAEDSVVLERAVRGDKKSLVVAVPMLPRIANFDDLDPLKAEPDVEVVMVPPGSSIPGDAGLVVLPGTKSTIADMQAVRDNGWDRQLSAHVKRGGHVLGICGGFQMLGHHISDPAGIEGHVRDIDGLGLLDIETVMEPEKVVRNVQATALLHNVPLEGYEIHIGRTTGPDMGWPFARIGEHDDGAISPDGRIMGTYLHGVFNADEFRRRFLQNLGVQSSSVNYRAGVEAALDELAEGLEACLDIDALFNLK.

The GATase cobBQ-type domain maps to 251–438; that stretch reads SLVVAVPMLP…LHGVFNADEF (188 aa). Cysteine 333 serves as the catalytic Nucleophile. Histidine 430 is a catalytic residue.

Belongs to the CobB/CobQ family. CobQ subfamily.

The protein operates within cofactor biosynthesis; adenosylcobalamin biosynthesis. Catalyzes amidations at positions B, D, E, and G on adenosylcobyrinic A,C-diamide. NH(2) groups are provided by glutamine, and one molecule of ATP is hydrogenolyzed for each amidation. This chain is Cobyric acid synthase, found in Brucella anthropi (strain ATCC 49188 / DSM 6882 / CCUG 24695 / JCM 21032 / LMG 3331 / NBRC 15819 / NCTC 12168 / Alc 37) (Ochrobactrum anthropi).